A 164-amino-acid chain; its full sequence is ATP synthase subunit b (164 aa).

Residues 8–28 (IGLFFWQTIVFLILLFLMAKF) traverse the membrane as a helical segment.

Belongs to the ATPase B chain family. As to quaternary structure, F-type ATPases have 2 components, F(1) - the catalytic core - and F(0) - the membrane proton channel. F(1) has five subunits: alpha(3), beta(3), gamma(1), delta(1), epsilon(1). F(0) has three main subunits: a(1), b(2) and c(10-14). The alpha and beta chains form an alternating ring which encloses part of the gamma chain. F(1) is attached to F(0) by a central stalk formed by the gamma and epsilon chains, while a peripheral stalk is formed by the delta and b chains.

It is found in the cell membrane. In terms of biological role, f(1)F(0) ATP synthase produces ATP from ADP in the presence of a proton or sodium gradient. F-type ATPases consist of two structural domains, F(1) containing the extramembraneous catalytic core and F(0) containing the membrane proton channel, linked together by a central stalk and a peripheral stalk. During catalysis, ATP synthesis in the catalytic domain of F(1) is coupled via a rotary mechanism of the central stalk subunits to proton translocation. Its function is as follows. Component of the F(0) channel, it forms part of the peripheral stalk, linking F(1) to F(0). This is ATP synthase subunit b from Christiangramia forsetii (strain DSM 17595 / CGMCC 1.15422 / KT0803) (Gramella forsetii).